The primary structure comprises 660 residues: Leucine-rich repeat transmembrane protein FLRT2 (660 aa).

A signal peptide spans 1–35; the sequence is MGLQTTKWPGRGAFILKFWLIISLGLYLQVSKLLA. 2 cysteine pairs are disulfide-bonded: C36–C42 and C40–C49. Residues 36 to 63 form the LRRNT domain; it reads CPSVCRCDRNFVYCNERSLTSVPLGIPE. Over 36–540 the chain is Extracellular; that stretch reads CPSVCRCDRN…QTTSHSMGSP (505 aa). LRR repeat units lie at residues 62–87, 88–108, 109–131, 132–157, 159–181, 183–202, 203–228, 229–251, 252–274, and 275–298; these read PEGVTVLYLHNNQINNAGFPAELHNV, QSVHTVYLYGNQLDEFPMNLP, KNVRVLHLQENNIQTISRAALAQ, LLKLEELHLDDNSISTVGVEDGAFRE, ISLKLLFLSKNHLSSVPVGLPVD, QELRVDENRIAVISDMAFQN, LTSLERLIVDGNLLTNKGIAEGTFSH, LTKLKEFSIVRNSLSHPPPDLPG, THLIRLYLQDNQINHIPLTAFAN, and LRKLERLDISNNQLRMLTQGVFDH. The N-linked (GlcNAc...) asparagine glycan is linked to N202. The LRRCT domain occupies 310 to 362; it reads NPWFCDCSIKWVTEWLKYIPSSLNVRGFMCQGPEQVRGMAVRELNMNLLSCPT. Cystine bridges form between C314-C339 and C316-C360. Over residues 371–396 the composition is skewed to low complexity; that stretch reads TPAPSTVSPTTQSPTLSVPSPSRGSV. Residues 371 to 413 form a disordered region; sequence TPAPSTVSPTTQSPTLSVPSPSRGSVPPAPTPSKLPTIPDWDG. The Fibronectin type-III domain maps to 419-517; sequence PPISERIQLS…ICSEATTHAS (99 aa). A helical transmembrane segment spans residues 541 to 561; it reads FLLAGLIGGAVIFVLVVLLSV. At 562 to 660 the chain is on the cytoplasmic side; sequence FCWHMHKKGR…SVPDLEHCHT (99 aa).

As to quaternary structure, self-associates (via leucine-rich repeats), giving rise to homooligomers. Interacts with FGFR1. Interacts with FGFR2. Interacts (via extracellular domain) with ADGRL1/LPHN1. Interacts (via extracellular domain) with ADGRL3 (via olfactomedin-like domain). Interacts (via extracellular domain) with UNC5D (via the first Ig-like domain). Can also interact (via extracellular domain) with UNC5B, but with much lower affinity. Interacts (via extracellular domain) with FN1. Post-translationally, N-glycosylated. Proteolytic cleavage in the juxtamembrane region gives rise to a soluble ectodomain. Cleavage is probably effected by a metalloprotease. In terms of tissue distribution, detected in adult brain (at protein level).

The protein localises to the cell membrane. It is found in the endoplasmic reticulum membrane. The protein resides in the cell junction. Its subcellular location is the focal adhesion. It localises to the secreted. The protein localises to the extracellular space. It is found in the extracellular matrix. The protein resides in the synapse. Its subcellular location is the synaptosome. It localises to the microsome membrane. Its function is as follows. Functions in cell-cell adhesion, cell migration and axon guidance. Mediates cell-cell adhesion via its interactions with ADGRL3 and probably also other latrophilins that are expressed at the surface of adjacent cells. May play a role in the migration of cortical neurons during brain development via its interaction with UNC5D. Mediates axon growth cone collapse and plays a repulsive role in neuron guidance via its interaction with UNC5D, and possibly also other UNC-5 family members. Plays a role in fibroblast growth factor-mediated signaling cascades. Required for normal organization of the cardiac basement membrane during embryogenesis, and for normal embryonic epicardium and heart morphogenesis. The chain is Leucine-rich repeat transmembrane protein FLRT2 from Mus musculus (Mouse).